The following is a 354-amino-acid chain: UDP-N-acetylglucosamine--N-acetylmuramyl-(pentapeptide) pyrophosphoryl-undecaprenol N-acetylglucosamine transferase (354 aa).

UDP-N-acetyl-alpha-D-glucosamine contacts are provided by residues 11–13 (TAG), Arg164, Ser194, and Gln289.

It belongs to the glycosyltransferase 28 family. MurG subfamily.

It is found in the cell membrane. The enzyme catalyses di-trans,octa-cis-undecaprenyl diphospho-N-acetyl-alpha-D-muramoyl-L-alanyl-D-glutamyl-meso-2,6-diaminopimeloyl-D-alanyl-D-alanine + UDP-N-acetyl-alpha-D-glucosamine = di-trans,octa-cis-undecaprenyl diphospho-[N-acetyl-alpha-D-glucosaminyl-(1-&gt;4)]-N-acetyl-alpha-D-muramoyl-L-alanyl-D-glutamyl-meso-2,6-diaminopimeloyl-D-alanyl-D-alanine + UDP + H(+). It participates in cell wall biogenesis; peptidoglycan biosynthesis. Its function is as follows. Cell wall formation. Catalyzes the transfer of a GlcNAc subunit on undecaprenyl-pyrophosphoryl-MurNAc-pentapeptide (lipid intermediate I) to form undecaprenyl-pyrophosphoryl-MurNAc-(pentapeptide)GlcNAc (lipid intermediate II). This Lachnospira eligens (strain ATCC 27750 / DSM 3376 / VPI C15-48 / C15-B4) (Eubacterium eligens) protein is UDP-N-acetylglucosamine--N-acetylmuramyl-(pentapeptide) pyrophosphoryl-undecaprenol N-acetylglucosamine transferase.